The primary structure comprises 243 residues: Cell division protein ZipA (243 aa).

Topologically, residues 1-4 (MSDV) are periplasmic. A helical transmembrane segment spans residues 5 to 25 (TLLRIGIAIVGILFVAAVFFF). Residues 26–243 (STPKTSAHRV…VPPLIKNSRW (218 aa)) lie on the Cytoplasmic side of the membrane. The interval 32–89 (AHRVRTKKEEPPRERREPMLSTEVDNSPHQSVDEVPASVPQQQVNPEATKPGEIELGK) is disordered. Residues 38–49 (KKEEPPRERREP) are compositionally biased toward basic and acidic residues.

Belongs to the ZipA family. Interacts with FtsZ via their C-terminal domains.

Its subcellular location is the cell inner membrane. Functionally, essential cell division protein that stabilizes the FtsZ protofilaments by cross-linking them and that serves as a cytoplasmic membrane anchor for the Z ring. Also required for the recruitment to the septal ring of downstream cell division proteins. In Xylella fastidiosa (strain Temecula1 / ATCC 700964), this protein is Cell division protein ZipA.